Here is a 380-residue protein sequence, read N- to C-terminus: Cytochrome b (380 aa).

Helical transmembrane passes span 34–54 (FGSLLGVCLIAQIATGLFLAM), 78–99 (WLLRNLHANGASFFFICIYFHI), 114–134 (WNIGVILLFLVMATAFVGYVL), and 179–199 (FFTFHFILPFIIAAASMINLL). Residues H84 and H98 each coordinate heme b. A heme b-binding site is contributed by H183. Position 202 (H202) interacts with a ubiquinone. 4 consecutive transmembrane segments (helical) span residues 227–247 (YKDLLGFVIMLGALASLSTFA), 289–309 (LGGVLALLLSIMILFLMPIIH), 321–341 (IAKTFFWALIANTAILTWIGG), and 348–368 (FITIGQIASGLYFLIFVLLIP).

This sequence belongs to the cytochrome b family. The cytochrome bc1 complex contains 3 respiratory subunits (MT-CYB, CYC1 and UQCRFS1), 2 core proteins (UQCRC1 and UQCRC2) and probably 6 low-molecular weight proteins. The cofactor is heme b.

It localises to the mitochondrion inner membrane. In terms of biological role, component of the ubiquinol-cytochrome c reductase complex (complex III or cytochrome b-c1 complex) that is part of the mitochondrial respiratory chain. The b-c1 complex mediates electron transfer from ubiquinol to cytochrome c. Contributes to the generation of a proton gradient across the mitochondrial membrane that is then used for ATP synthesis. The polypeptide is Cytochrome b (mt-cyb) (Pelophylax plancyi (Korean pond frog)).